Reading from the N-terminus, the 82-residue chain is Probable 26S proteasome complex subunit dss-1 (82 aa).

Residues N56–A82 form a disordered region. Positions E63–K76 are enriched in basic and acidic residues.

The protein belongs to the DSS1/SEM1 family. Part of the 26S proteasome. In terms of tissue distribution, expressed in intestinal epithelium and head neurons.

Its subcellular location is the nucleus. The protein resides in the cytoplasm. In terms of biological role, subunit of the 26S proteasome which plays a role in ubiquitin-dependent proteolysis. Has an essential role in oogenesis and larval growth. Required for intestinal function and default lifespan. The chain is Probable 26S proteasome complex subunit dss-1 (dss-1) from Caenorhabditis elegans.